We begin with the raw amino-acid sequence, 217 residues long: Membrane-spanning 4-domains subfamily A member 6C (217 aa).

The span at 1 to 20 shows a compositional bias: polar residues; that stretch reads MIPQVVTNETITTISPNGIN. The disordered stretch occupies residues 1–33; it reads MIPQVVTNETITTISPNGINFPQKDESQPTQQR. Residues 1-46 lie on the Cytoplasmic side of the membrane; that stretch reads MIPQVVTNETITTISPNGINFPQKDESQPTQQRQDSLKKHLKAEIK. Residues 47–67 form a helical membrane-spanning segment; sequence VIVAIQIMCAVTVLALGIILA. The Extracellular segment spans residues 68–84; that stretch reads SVPPVPYFNSVFSVLLK. A helical transmembrane segment spans residues 85 to 105; it reads SGYPFIGALFFIASGILSIIT. Topologically, residues 106 to 121 are cytoplasmic; sequence ERKSTKPLVDASLTLN. A helical transmembrane segment spans residues 122–142; it reads ILSVSFAFVGIIIISVSLAGL. At 143–186 the chain is on the extracellular side; sequence HPASEQCKQSKELSLIEHDYYQPFYNSDRSECAVTKSILTGALS. The helical transmembrane segment at 187–207 threads the bilayer; the sequence is VMLIISVLELGLALLSAMLWL. Residues 208-217 lie on the Cytoplasmic side of the membrane; the sequence is REGVLTSLRM.

This sequence belongs to the MS4A family. In terms of tissue distribution, expressed only by thymus, spleen, peripheral lymph node and bone marrow.

The protein resides in the membrane. May be involved in signal transduction as a component of a multimeric receptor complex. The chain is Membrane-spanning 4-domains subfamily A member 6C (Ms4a6c) from Mus musculus (Mouse).